A 391-amino-acid polypeptide reads, in one-letter code: Probable protein phosphatase 2C 32 (391 aa).

The disordered stretch occupies residues 1-53 (MSCTVAIPSSPVFSPSRRPLSCKAASASASPESVSVAASSPAQAAPPAGSPLR). Low complexity predominate over residues 8-51 (PSSPVFSPSRRPLSCKAASASASPESVSVAASSPAQAAPPAGSP). The helical transmembrane segment at 95 to 115 (LVVPVCGGAAAAAAAAAVAAV) threads the bilayer. The region spanning 129 to 386 (EFAVYCRRGK…DDISIVIIQL (258 aa)) is the PPM-type phosphatase domain. Mn(2+) is bound by residues Asp-168, Gly-169, Asp-332, and Asp-377.

It belongs to the PP2C family. Requires Mg(2+) as cofactor. Mn(2+) serves as cofactor.

The protein localises to the membrane. It catalyses the reaction O-phospho-L-seryl-[protein] + H2O = L-seryl-[protein] + phosphate. It carries out the reaction O-phospho-L-threonyl-[protein] + H2O = L-threonyl-[protein] + phosphate. In Oryza sativa subsp. japonica (Rice), this protein is Probable protein phosphatase 2C 32.